A 617-amino-acid chain; its full sequence is Secretogranin-2 (617 aa).

A signal peptide spans methionine 1–alanine 27. The propeptide occupies alanine 28–phenylalanine 30. Positions asparagine 123–methionine 147 are disordered. Tyrosine 151 carries the sulfotyrosine modification. Residues serine 174, serine 268, serine 432, serine 532, serine 555, and serine 556 each carry the phosphoserine modification. Residues asparagine 552–glutamine 583 are disordered.

It belongs to the chromogranin/secretogranin protein family. Interacts with Secretogranin III/SCG3.

The protein localises to the secreted. In terms of biological role, neuroendocrine protein of the granin family that regulates the biogenesis of secretory granules. This chain is Secretogranin-2 (SCG2), found in Macaca fascicularis (Crab-eating macaque).